We begin with the raw amino-acid sequence, 120 residues long: Putative cysteine proteinase inhibitor 11 (120 aa).

A signal peptide spans M1–A24. Positions Q73–G77 match the Secondary area of contact motif.

This sequence belongs to the cystatin family. Phytocystatin subfamily.

Its subcellular location is the secreted. Its function is as follows. Specific inhibitor of cysteine proteinases. Probably involved in the regulation of endogenous processes and in defense against pests and pathogens. This is Putative cysteine proteinase inhibitor 11 from Oryza sativa subsp. japonica (Rice).